Reading from the N-terminus, the 107-residue chain is 4-carboxymethyl-4-methylbutenolide mutase (107 aa).

Histidine 26 functions as the Proton donor/acceptor in the catalytic mechanism. Residues histidine 26 and tyrosine 39 each contribute to the 3-methylmuconolactone site. Positions 26 and 39 each coordinate 4-methylmuconolactone.

The protein belongs to the MmlI family. As to quaternary structure, homodimer.

The enzyme catalyses 4-methylmuconolactone = 3-methylmuconolactone. Inhibited by p-chloromercuribenzoate. Its function is as follows. Isomerase involved in the degradation of 4-methylsalicylate and 5-methylsalicylate. Catalyzes the isomerization of the dead-end metabolite 4-methylmuconolactone (4-ML) to 3-methylmuconolactone (3-ML), which can then be further degraded through a modified 3-oxoadipate pathway. Can also use 1-methylbislactone but not 3-methyl-cis,cis-muconate. This chain is 4-carboxymethyl-4-methylbutenolide mutase, found in Pseudomonas reinekei.